A 434-amino-acid chain; its full sequence is Trigger factor (434 aa).

One can recognise a PPIase FKBP-type domain in the interval 160–245 (GDKVKMNFVG…LTEVQAANLP (86 aa)).

The protein belongs to the FKBP-type PPIase family. Tig subfamily.

It localises to the cytoplasm. It catalyses the reaction [protein]-peptidylproline (omega=180) = [protein]-peptidylproline (omega=0). Involved in protein export. Acts as a chaperone by maintaining the newly synthesized protein in an open conformation. Functions as a peptidyl-prolyl cis-trans isomerase. The polypeptide is Trigger factor (Shewanella putrefaciens (strain CN-32 / ATCC BAA-453)).